A 204-amino-acid chain; its full sequence is Salt stress root protein RS1 (204 aa).

The segment at 128 to 204 (FVPKEEPKPE…AAPAAEPEKQ (77 aa)) is disordered. Residues 147–161 (TSREVAVEEEKKEEE) show a composition bias toward basic and acidic residues. Over residues 164-180 (PAEPAAAAAEAAAPSTE) the composition is skewed to low complexity. The segment covering 182-192 (VEEKKEEEKPA) has biased composition (basic and acidic residues). Low complexity predominate over residues 193–204 (EAAAPAAEPEKQ).

This sequence belongs to the DREPP family.

The protein is Salt stress root protein RS1 of Oryza sativa subsp. indica (Rice).